Reading from the N-terminus, the 143-residue chain is Putative pre-16S rRNA nuclease (143 aa).

Belongs to the YqgF nuclease family.

It is found in the cytoplasm. Its function is as follows. Could be a nuclease involved in processing of the 5'-end of pre-16S rRNA. The sequence is that of Putative pre-16S rRNA nuclease from Leuconostoc citreum (strain KM20).